Reading from the N-terminus, the 891-residue chain is Major core protein 4a precursor (891 aa).

It belongs to the poxviridae protein P4a family. As to quaternary structure, interacts with P39/A4.

The protein resides in the virion. Core protein 4a is the most abundant virion protein. Major component of the virion core that undergoes proteolytic processing during the immature virion (IV) to mature virion (MV) transition. The polypeptide is Major core protein 4a precursor (Fowlpox virus (strain NVSL) (FPV)).